We begin with the raw amino-acid sequence, 147 residues long: MSDESNPPKVILLVEDSKADSRLVQEVLKTSTIDHELIILRDGLAAMAFLQQQGEYENSPRPNLILLDLNLPKKDGREVLAEIKQNPDLKRIPVVVLTTSHNEDDVIASYELHVNCYLTKSRNLKDLFKMVQGIESFWLETVTLPAA.

In terms of domain architecture, Response regulatory spans 10-135; that stretch reads VILLVEDSKA…DLFKMVQGIE (126 aa). Position 68 is a 4-aspartylphosphate (aspartate 68).

Phosphorylated by Cph1.

In terms of biological role, forms a two-component system with Cph1 in which it acts as receiver substrate. The polypeptide is Response regulator Rcp1 (rcp1) (Synechocystis sp. (strain ATCC 27184 / PCC 6803 / Kazusa)).